The primary structure comprises 81 residues: Beta-catenin-interacting protein 1 (81 aa).

Serine 59 is modified (phosphoserine).

It belongs to the CTNNBIP1 family. In terms of assembly, binds CTNNB1.

The protein localises to the cytoplasm. It is found in the nucleus. Prevents the interaction between CTNNB1 and TCF family members, and acts as a negative regulator of the Wnt signaling pathway. This is Beta-catenin-interacting protein 1 (CTNNBIP1) from Homo sapiens (Human).